A 497-amino-acid chain; its full sequence is Cytochrome P450 monooxygenase cicH (497 aa).

Residues 2-19 form a helical membrane-spanning segment; it reads AILVRLFFALFVVSVYFF. Residue C439 participates in heme binding. An N-linked (GlcNAc...) asparagine glycan is attached at N443.

Belongs to the cytochrome P450 family. The cofactor is heme.

The protein localises to the membrane. It functions in the pathway phytotoxin biosynthesis. Functionally, cytochrome P450 monooxygenase; part of the gene cluster that mediates the biosynthesis of cichorine, a phytotoxin active against knapweed, corn, and soybeans. The first step in the pathway is performed by the non-reducing polyketide synthase pkbA that condenses one acetyl-CoA starter unit with 3 malonyl-CoA units. PkbA also catalyzes one methylation step to produce 3-methylorsellinate. The nonribosomal peptide synthase-like protein cicB, the cytochrome P450 monooxygenase cicH and the O-methyltransferase cicE are involved in the conversion of 3-methylorsellinate into nidulol. CicB converts 3-methylorsellinate to a yet unidentified intermediate, cicH may play a ring-closing role for cichorine and cicE is plausibly responsible for the methylation of one of the phenol groups. The oxidoreductase cicC acts downstream with still unidentified enzymes to further convert nidulol into cichorine. The protein is Cytochrome P450 monooxygenase cicH of Emericella nidulans (strain FGSC A4 / ATCC 38163 / CBS 112.46 / NRRL 194 / M139) (Aspergillus nidulans).